Here is a 922-residue protein sequence, read N- to C-terminus: Lacticin 481/lactococcin biosynthesis protein LcnDR2 (922 aa).

Could be implicated in the processing or the export process of the lantibiotic lacticin 481/lactococcin DR. This chain is Lacticin 481/lactococcin biosynthesis protein LcnDR2 (lcnDR2), found in Lactococcus lactis subsp. lactis (Streptococcus lactis).